The following is a 33-amino-acid chain: Dermonecrotic toxin LbSicTox-alphaIB1b (33 aa).

Residue His11 is part of the active site. Positions 31 and 33 each coordinate Mg(2+).

It belongs to the arthropod phospholipase D family. Class II subfamily. Mg(2+) is required as a cofactor. In terms of processing, contains 2 disulfide bonds. As to expression, expressed by the venom gland.

It is found in the secreted. The catalysed reaction is an N-(acyl)-sphingosylphosphocholine = an N-(acyl)-sphingosyl-1,3-cyclic phosphate + choline. It carries out the reaction an N-(acyl)-sphingosylphosphoethanolamine = an N-(acyl)-sphingosyl-1,3-cyclic phosphate + ethanolamine. The enzyme catalyses a 1-acyl-sn-glycero-3-phosphocholine = a 1-acyl-sn-glycero-2,3-cyclic phosphate + choline. It catalyses the reaction a 1-acyl-sn-glycero-3-phosphoethanolamine = a 1-acyl-sn-glycero-2,3-cyclic phosphate + ethanolamine. Its function is as follows. Dermonecrotic toxins cleave the phosphodiester linkage between the phosphate and headgroup of certain phospholipids (sphingolipid and lysolipid substrates), forming an alcohol (often choline) and a cyclic phosphate. This toxin acts on sphingomyelin (SM) with high activity (9.5 U/mg). It may also act on ceramide phosphoethanolamine (CPE), lysophosphatidylcholine (LPC) and lysophosphatidylethanolamine (LPE), but not on lysophosphatidylserine (LPS), and lysophosphatidylglycerol (LPG). It acts by transphosphatidylation, releasing exclusively cyclic phosphate products as second products. Induces dermonecrosis, hemolysis, increased vascular permeability, edema, inflammatory response, and platelet aggregation. The chain is Dermonecrotic toxin LbSicTox-alphaIB1b from Loxosceles boneti (North American fiddleback spider).